Here is a 329-residue protein sequence, read N- to C-terminus: NAD(P)H-dependent D-xylose reductase (329 aa).

Residue tyrosine 52 is the Proton donor of the active site. Position 114 (histidine 114) interacts with substrate. NAD(+) contacts are provided by residues 173-174 (SN), 222-231 (SSFGPVSFLE), and 278-288 (KSSKKERLLDN).

This sequence belongs to the aldo/keto reductase family.

It catalyses the reaction xylitol + NAD(+) = D-xylose + NADH + H(+). The enzyme catalyses xylitol + NADP(+) = D-xylose + NADPH + H(+). It participates in carbohydrate metabolism; D-xylose degradation. In terms of biological role, reduces D-xylose into xylitol. The protein is NAD(P)H-dependent D-xylose reductase (XYL1) of Kluyveromyces lactis (strain ATCC 8585 / CBS 2359 / DSM 70799 / NBRC 1267 / NRRL Y-1140 / WM37) (Yeast).